Reading from the N-terminus, the 1088-residue chain is Platelet-derived growth factor receptor alpha (1088 aa).

An N-terminal signal peptide occupies residues M1–Q23. Ig-like C2-type domains lie at L24–E112, I116–S200, E201–T305, P318–S409, and P413–V516. Over L24 to A527 the chain is Extracellular. C48 and C99 are joined by a disulfide. Residues N75, N102, and N178 are each glycosylated (N-linked (GlcNAc...) asparagine). 2 cysteine pairs are disulfide-bonded: C149/C188 and C234/C289. N-linked (GlcNAc...) asparagine glycosylation is found at N352, N358, N457, and N467. C434 and C500 are disulfide-bonded. The helical transmembrane segment at A528 to W548 threads the bilayer. Over K549–L1088 the chain is Cytoplasmic. Residues Y571 and Y573 each carry the phosphotyrosine; by autocatalysis modification. The region spanning L592–L953 is the Protein kinase domain. ATP is bound by residues L598–V606 and K626. Phosphotyrosine; by autocatalysis occurs at positions 719, 730, 741, 753, 761, and 767. Residue D817 is the Proton acceptor of the active site. 3 positions are modified to phosphotyrosine; by autocatalysis: Y848, Y987, and Y1017. The interval Y1017–L1088 is disordered. The span at S1040–F1058 shows a compositional bias: polar residues. Over residues E1064–L1088 the composition is skewed to acidic residues.

It belongs to the protein kinase superfamily. Tyr protein kinase family. CSF-1/PDGF receptor subfamily. As to quaternary structure, interacts with homodimeric PDGFA, PDGFB and PDGFC, and with heterodimers formed by PDGFA and PDGFB. Monomer in the absence of bound ligand. Interaction with dimeric PDGFA, PDGFB and/or PDGFC leads to receptor dimerization, where both PDGFRA homodimers and heterodimers with PDGFRB are observed. Interacts (tyrosine phosphorylated) with SHB (via SH2 domain). Interacts (tyrosine phosphorylated) with SHF (via SH2 domain). Interacts (tyrosine phosphorylated) with SRC (via SH2 domain). Interacts (tyrosine phosphorylated) with PIK3R1. Interacts (tyrosine phosphorylated) with PLCG1 (via SH2 domain). Interacts (tyrosine phosphorylated) with CRK, GRB2 and GRB7. Interacts with CD248; this interaction promotes PDGF receptor signaling pathway. In terms of processing, ubiquitinated, leading to its internalization and degradation. Post-translationally, autophosphorylated on tyrosine residues upon ligand binding. Autophosphorylation occurs in trans, i.e. one subunit of the dimeric receptor phosphorylates tyrosine residues on the other subunit. Phosphorylation at Tyr-730 and Tyr-741 is important for interaction with PIK3R1. Phosphorylation at Tyr-719 and Tyr-753 is important for interaction with PTPN11. Phosphorylation at Tyr-761 is important for interaction with CRK. Phosphorylation at Tyr-571 and Tyr-573 is important for interaction with SRC and SRC family members. Phosphorylation at Tyr-987 and Tyr-1017 is important for interaction with PLCG1.

The protein localises to the cell membrane. Its subcellular location is the cell projection. The protein resides in the cilium. It localises to the golgi apparatus. It catalyses the reaction L-tyrosyl-[protein] + ATP = O-phospho-L-tyrosyl-[protein] + ADP + H(+). Present in an inactive conformation in the absence of bound ligand. Binding of PDGFA and/or PDGFB leads to dimerization and activation by autophosphorylation on tyrosine residues. Inhibited by imatinib, nilotinib and sorafenib. Tyrosine-protein kinase that acts as a cell-surface receptor for PDGFA, PDGFB and PDGFC and plays an essential role in the regulation of embryonic development, cell proliferation, survival and chemotaxis. Depending on the context, promotes or inhibits cell proliferation and cell migration. Plays an important role in the differentiation of bone marrow-derived mesenchymal stem cells. Required for normal skeleton development and cephalic closure during embryonic development. Required for normal development of the mucosa lining the gastrointestinal tract, and for recruitment of mesenchymal cells and normal development of intestinal villi. Plays a role in cell migration and chemotaxis in wound healing. Plays a role in platelet activation, secretion of agonists from platelet granules, and in thrombin-induced platelet aggregation. Binding of its cognate ligands - homodimeric PDGFA, homodimeric PDGFB, heterodimers formed by PDGFA and PDGFB or homodimeric PDGFC -leads to the activation of several signaling cascades; the response depends on the nature of the bound ligand and is modulated by the formation of heterodimers between PDGFRA and PDGFRB. Phosphorylates PIK3R1, PLCG1, and PTPN11. Activation of PLCG1 leads to the production of the cellular signaling molecules diacylglycerol and inositol 1,4,5-trisphosphate, mobilization of cytosolic Ca(2+) and the activation of protein kinase C. Phosphorylates PIK3R1, the regulatory subunit of phosphatidylinositol 3-kinase, and thereby mediates activation of the AKT1 signaling pathway. Mediates activation of HRAS and of the MAP kinases MAPK1/ERK2 and/or MAPK3/ERK1. Promotes activation of STAT family members STAT1, STAT3 and STAT5A and/or STAT5B. Receptor signaling is down-regulated by protein phosphatases that dephosphorylate the receptor and its down-stream effectors, and by rapid internalization of the activated receptor. The chain is Platelet-derived growth factor receptor alpha (Pdgfra) from Rattus norvegicus (Rat).